We begin with the raw amino-acid sequence, 405 residues long: Eukaryotic initiation factor 4A (405 aa).

The short motif at 31-59 (ECFEALNLEGDLLRGIFAYGFEKPSAIQQ) is the Q motif element. One can recognise a Helicase ATP-binding domain in the interval 62–232 (IKPILDGYDT…TQFMRDPKRI (171 aa)). An ATP-binding site is contributed by 75–82 (AQSGTGKT). Residues 180–183 (DEAD) carry the DEAD box motif. Residues 243-404 (GIRQFYVGVE…EMPMGITDIL (162 aa)) form the Helicase C-terminal domain.

The protein belongs to the DEAD box helicase family. eIF4A subfamily. As to quaternary structure, eIF4F is a multi-subunit complex, the composition of which varies with external and internal environmental conditions. It is composed of at least EIF4A, EIF4E and EIF4G.

It carries out the reaction ATP + H2O = ADP + phosphate + H(+). In terms of biological role, ATP-dependent RNA helicase which is a subunit of the eIF4F complex involved in cap recognition and is required for mRNA binding to ribosome. In the current model of translation initiation, eIF4A unwinds RNA secondary structures in the 5'-UTR of mRNAs which is necessary to allow efficient binding of the small ribosomal subunit, and subsequent scanning for the initiator codon. The sequence is that of Eukaryotic initiation factor 4A (EIF4-A) from Cryptosporidium parvum.